An 83-amino-acid polypeptide reads, in one-letter code: Small ribosomal subunit protein uS17 (83 aa).

It belongs to the universal ribosomal protein uS17 family. Part of the 30S ribosomal subunit.

One of the primary rRNA binding proteins, it binds specifically to the 5'-end of 16S ribosomal RNA. The polypeptide is Small ribosomal subunit protein uS17 (Campylobacter curvus (strain 525.92)).